A 106-amino-acid chain; its full sequence is Met repressor (106 aa).

The protein belongs to the MetJ family. In terms of assembly, homodimer.

The protein resides in the cytoplasm. This regulatory protein, when combined with SAM (S-adenosylmethionine) represses the expression of the methionine regulon and of enzymes involved in SAM synthesis. This Vibrio campbellii (strain ATCC BAA-1116) protein is Met repressor.